Reading from the N-terminus, the 607-residue chain is Aspartate--tRNA(Asp/Asn) ligase (607 aa).

E194 is a binding site for L-aspartate. Positions 218-221 are aspartate; the sequence is QLFK. R240 contacts L-aspartate. Residues 240–242 and Q249 each bind ATP; that span reads RDE. H468 contacts L-aspartate. E502 is an ATP binding site. Position 509 (R509) interacts with L-aspartate. Residue 554–557 coordinates ATP; sequence GLDR.

It belongs to the class-II aminoacyl-tRNA synthetase family. Type 1 subfamily. In terms of assembly, homodimer.

The protein localises to the cytoplasm. It catalyses the reaction tRNA(Asx) + L-aspartate + ATP = L-aspartyl-tRNA(Asx) + AMP + diphosphate. In terms of biological role, aspartyl-tRNA synthetase with relaxed tRNA specificity since it is able to aspartylate not only its cognate tRNA(Asp) but also tRNA(Asn). Reaction proceeds in two steps: L-aspartate is first activated by ATP to form Asp-AMP and then transferred to the acceptor end of tRNA(Asp/Asn). This chain is Aspartate--tRNA(Asp/Asn) ligase, found in Desulfotalea psychrophila (strain LSv54 / DSM 12343).